The following is a 33-amino-acid chain: Cysteine-rich venom protein (33 aa).

The segment at 1 to 33 is disordered; it reads NVDFNSESTRRKKKQKEIVDLHNSLRRRVSPTA. The segment covering 24-33 has biased composition (basic residues); sequence SLRRRVSPTA.

This sequence belongs to the CRISP family. In terms of processing, contains 8 disulfide bonds. In terms of tissue distribution, expressed by the venom gland.

The protein localises to the secreted. Blocks contraction of smooth muscle elicited by high potassium-induced depolarization, but does not block caffeine-stimulated contraction. May target voltage-gated calcium channels on smooth muscle (Cav). The polypeptide is Cysteine-rich venom protein (Naja naja (Indian cobra)).